Here is a 206-residue protein sequence, read N- to C-terminus: Thymidylate kinase (206 aa).

11–18 (GIDGAGKT) provides a ligand contact to ATP.

The protein belongs to the thymidylate kinase family.

The catalysed reaction is dTMP + ATP = dTDP + ADP. In terms of biological role, phosphorylation of dTMP to form dTDP in both de novo and salvage pathways of dTTP synthesis. The polypeptide is Thymidylate kinase (Paraburkholderia phytofirmans (strain DSM 17436 / LMG 22146 / PsJN) (Burkholderia phytofirmans)).